The chain runs to 955 residues: Isoleucine--tRNA ligase (955 aa).

The 'HIGH' region motif lies at 58-68 (IYANGDIHIGH). L-isoleucyl-5'-AMP is bound at residue Glu552. A 'KMSKS' region motif is present at residues 593–597 (KMSKS). Lys596 lines the ATP pocket. Residues Cys918, Cys921, Cys938, and Cys941 each coordinate Zn(2+).

This sequence belongs to the class-I aminoacyl-tRNA synthetase family. IleS type 1 subfamily. In terms of assembly, monomer. Requires Zn(2+) as cofactor.

The protein localises to the cytoplasm. The enzyme catalyses tRNA(Ile) + L-isoleucine + ATP = L-isoleucyl-tRNA(Ile) + AMP + diphosphate. In terms of biological role, catalyzes the attachment of isoleucine to tRNA(Ile). As IleRS can inadvertently accommodate and process structurally similar amino acids such as valine, to avoid such errors it has two additional distinct tRNA(Ile)-dependent editing activities. One activity is designated as 'pretransfer' editing and involves the hydrolysis of activated Val-AMP. The other activity is designated 'posttransfer' editing and involves deacylation of mischarged Val-tRNA(Ile). This is Isoleucine--tRNA ligase from Vesicomyosocius okutanii subsp. Calyptogena okutanii (strain HA).